The following is a 307-amino-acid chain: Porphobilinogen deaminase (307 aa).

Cys-239 carries the post-translational modification S-(dipyrrolylmethanemethyl)cysteine.

The protein belongs to the HMBS family. Monomer. The cofactor is dipyrromethane.

The enzyme catalyses 4 porphobilinogen + H2O = hydroxymethylbilane + 4 NH4(+). Its pathway is porphyrin-containing compound metabolism; protoporphyrin-IX biosynthesis; coproporphyrinogen-III from 5-aminolevulinate: step 2/4. Tetrapolymerization of the monopyrrole PBG into the hydroxymethylbilane pre-uroporphyrinogen in several discrete steps. The chain is Porphobilinogen deaminase from Campylobacter jejuni subsp. jejuni serotype O:6 (strain 81116 / NCTC 11828).